We begin with the raw amino-acid sequence, 383 residues long: Acetylornithine deacetylase (383 aa).

His80 serves as a coordination point for Zn(2+). The active site involves Asp82. Asp112 serves as a coordination point for Zn(2+). Residue Glu144 is part of the active site. Zn(2+) is bound by residues Glu145, Glu169, and His355.

Belongs to the peptidase M20A family. ArgE subfamily. As to quaternary structure, homodimer. Zn(2+) is required as a cofactor. Co(2+) serves as cofactor. It depends on glutathione as a cofactor.

Its subcellular location is the cytoplasm. The catalysed reaction is N(2)-acetyl-L-ornithine + H2O = L-ornithine + acetate. It functions in the pathway amino-acid biosynthesis; L-arginine biosynthesis; L-ornithine from N(2)-acetyl-L-ornithine (linear): step 1/1. Its function is as follows. Catalyzes the hydrolysis of the amide bond of N(2)-acetylated L-amino acids. Cleaves the acetyl group from N-acetyl-L-ornithine to form L-ornithine, an intermediate in L-arginine biosynthesis pathway, and a branchpoint in the synthesis of polyamines. This is Acetylornithine deacetylase from Salmonella heidelberg (strain SL476).